The chain runs to 601 residues: Glutamine--fructose-6-phosphate aminotransferase [isomerizing] (601 aa).

The active-site Nucleophile; for GATase activity is Cys-2. The 215-residue stretch at 2-216 (CGIVGYIGTN…DKEIVIVTKD (215 aa)) folds into the Glutamine amidotransferase type-2 domain. SIS domains lie at 282 to 421 (ILDE…EIGD) and 453 to 591 (IAGE…VDKP). Catalysis depends on Lys-596, which acts as the For Fru-6P isomerization activity.

In terms of assembly, homodimer.

It is found in the cytoplasm. The catalysed reaction is D-fructose 6-phosphate + L-glutamine = D-glucosamine 6-phosphate + L-glutamate. Catalyzes the first step in hexosamine metabolism, converting fructose-6P into glucosamine-6P using glutamine as a nitrogen source. The chain is Glutamine--fructose-6-phosphate aminotransferase [isomerizing] from Listeria innocua serovar 6a (strain ATCC BAA-680 / CLIP 11262).